The chain runs to 148 residues: Deoxyuridine 5'-triphosphate nucleotidohydrolase (148 aa).

Substrate-binding positions include 68–70 (RSG), N81, 85–87 (TID), and K95.

It belongs to the dUTPase family. Mg(2+) serves as cofactor.

The catalysed reaction is dUTP + H2O = dUMP + diphosphate + H(+). The protein operates within pyrimidine metabolism; dUMP biosynthesis; dUMP from dCTP (dUTP route): step 2/2. This enzyme is involved in nucleotide metabolism: it produces dUMP, the immediate precursor of thymidine nucleotides and it decreases the intracellular concentration of dUTP so that uracil cannot be incorporated into DNA. This is Deoxyuridine 5'-triphosphate nucleotidohydrolase from Rickettsia prowazekii (strain Madrid E).